The primary structure comprises 481 residues: Arf-GAP domain and FG repeat-containing protein 2 (481 aa).

One can recognise an Arf-GAP domain in the interval 27–153; sequence EVWCRRVREL…WYVPPDQVKG (127 aa). Residues 47–70 form a C4-type zinc finger; that stretch reads CFECAQRGVTYVDITVGSFVCTTC. Disordered stretches follow at residues 150–220, 271–309, and 431–481; these read QVKG…SVKK, SSVFGSLPPAGQASFQAQPTPAGSSQGTPFGATPLAPAS, and QQNG…NPFL. Over residues 157–166 the composition is skewed to polar residues; that stretch reads TKGSASTPVQ. N6-acetyllysine is present on Lys173. Polar residues-rich tracts occupy residues 188-210, 283-298, and 454-481; these read VAASTSSQPVSQSHARTSQARST, ASFQAQPTPAGSSQGT, and AGISTNPFMTGPSSSPFASKPPTTNPFL.

As to quaternary structure, interacts with EPS15R.

The chain is Arf-GAP domain and FG repeat-containing protein 2 (AGFG2) from Homo sapiens (Human).